Consider the following 776-residue polypeptide: Protein translocase subunit SecA 2 (776 aa).

Residues Gln-80, 98–102, and Asp-486 contribute to the ATP site; that span reads GEGKT.

It belongs to the SecA family. In terms of assembly, monomer and homodimer. Part of the essential Sec protein translocation apparatus which comprises SecA, SecYEG and auxiliary proteins SecDF. Other proteins may also be involved.

It is found in the cell membrane. The protein resides in the cytoplasm. It carries out the reaction ATP + H2O + cellular proteinSide 1 = ADP + phosphate + cellular proteinSide 2.. Part of the Sec protein translocase complex. Interacts with the SecYEG preprotein conducting channel. Has a central role in coupling the hydrolysis of ATP to the transfer of proteins into and across the cell membrane, serving as an ATP-driven molecular motor driving the stepwise translocation of polypeptide chains across the membrane. This Listeria monocytogenes serovar 1/2a (strain ATCC BAA-679 / EGD-e) protein is Protein translocase subunit SecA 2.